A 151-amino-acid chain; its full sequence is Deoxyuridine 5'-triphosphate nucleotidohydrolase (151 aa).

Substrate contacts are provided by residues 70–72 (RSG), N83, 87–89 (LID), and M97.

Belongs to the dUTPase family. The cofactor is Mg(2+).

The catalysed reaction is dUTP + H2O = dUMP + diphosphate + H(+). Its pathway is pyrimidine metabolism; dUMP biosynthesis; dUMP from dCTP (dUTP route): step 2/2. In terms of biological role, this enzyme is involved in nucleotide metabolism: it produces dUMP, the immediate precursor of thymidine nucleotides and it decreases the intracellular concentration of dUTP so that uracil cannot be incorporated into DNA. In Sodalis glossinidius (strain morsitans), this protein is Deoxyuridine 5'-triphosphate nucleotidohydrolase.